A 221-amino-acid polypeptide reads, in one-letter code: GTP cyclohydrolase III (221 aa).

The protein belongs to the archaeal-type GTP cyclohydrolase family.

It carries out the reaction GTP + 3 H2O = 2-amino-5-formylamino-6-(5-phospho-D-ribosylamino)pyrimidin-4(3H)-one + 2 phosphate + 2 H(+). In terms of biological role, catalyzes the formation of 2-amino-5-formylamino-6-ribofuranosylamino-4(3H)-pyrimidinone ribonucleotide monophosphate and inorganic phosphate from GTP. Also has an independent pyrophosphate phosphohydrolase activity. This chain is GTP cyclohydrolase III, found in Pyrobaculum arsenaticum (strain DSM 13514 / JCM 11321 / PZ6).